The sequence spans 1032 residues: GPI ethanolamine phosphate transferase 1 (1032 aa).

Over 1 to 6 (MARLGR) the chain is Cytoplasmic. A helical membrane pass occupies residues 7–27 (FGFLALAVVFHLIYAYSIFDI). Topologically, residues 28 to 468 (YFVSPIVSGM…LQTYDWLFLR (441 aa)) are lumenal. 2 N-linked (GlcNAc...) asparagine glycosylation sites follow: N150 and N435. Residues 469 to 489 (TIITFGYLGWIAYALTTVIDL) traverse the membrane as a helical segment. The Cytoplasmic portion of the chain corresponds to 490-500 (HVLHRTSDSKR). A helical membrane pass occupies residues 501-521 (TVGSTIFFTSILAALFSVLLY). Residues 522 to 523 (QK) are Lumenal-facing. The chain crosses the membrane as a helical span at residues 524–544 (SSWQYYVYGAFPIFFWEEVFA). Over 545–564 (RRKALIAGREILLGHVRSFG) the chain is Cytoplasmic. A helical transmembrane segment spans residues 565-585 (GYIASGFQLVAFVAVLEALLM). Topologically, residues 586–596 (RHQVQSYFHRE) are lumenal. The helical transmembrane segment at 597 to 617 (IYTVCFVLGSFWPILYGVDFV) threads the bilayer. Residues 618-622 (RQNTV) are Cytoplasmic-facing. The helical transmembrane segment at 623–643 (LSATWAVGCSLMSTFTLLPVI) threads the bilayer. Over 644-647 (KVEN) the chain is Lumenal. A helical transmembrane segment spans residues 648–668 (INTITYGALLMFFTGLFYLLF). The Cytoplasmic portion of the chain corresponds to 669–688 (EDTILKHSKSSGHAPGAISS). Residues 689–709 (LGSRVIMGMQVGMVLLALIVT) traverse the membrane as a helical segment. Residues 710 to 722 (RSSVSSLQAKQGL) are Lumenal-facing. A helical membrane pass occupies residues 723–743 (PFGNQVVGWFVLVASLVLPFF). Residues 744–766 (HRLYPNSHYLHRLMVLFLTFSPT) are Cytoplasmic-facing. A helical membrane pass occupies residues 767–787 (FIILTISYEGLFYFVFCMTLV). The Lumenal segment spans residues 788 to 841 (TWVRLEHAIYVYTARSSAHYGGNNTVPKKPGLNATAVIDGQEYRYRRLGLADTR). 2 N-linked (GlcNAc...) asparagine glycosylation sites follow: N810 and N820. The chain crosses the membrane as a helical span at residues 842 to 862 (VALFFFFLLQSAFFSTGNIAS). Residues 863-884 (VSSFSLESVFRLIPVFSPFSQS) are Cytoplasmic-facing. A helical transmembrane segment spans residues 885–905 (ALLILKLLIPFAIISANLGIL). The Lumenal portion of the chain corresponds to 906 to 914 (NRRLEVAPS). A helical membrane pass occupies residues 915-935 (ALFMVVMSISDVMTLNFFYMV). At 936 to 951 (RDEGSWLDIGTTISHF) the chain is on the cytoplasmic side. Residues 952–972 (LIASFLCTFVAGLEFLSEVFI) form a helical membrane-spanning segment. Residues 973–1032 (SGVDFGPTTKAIGASITKTVGGTAGSDVVDSQSGPEDAANSKKAEGLEGSETIRQNGGSV) lie on the Lumenal side of the membrane. Positions 994–1032 (GTAGSDVVDSQSGPEDAANSKKAEGLEGSETIRQNGGSV) are disordered.

The protein belongs to the PIGG/PIGN/PIGO family. PIGN subfamily.

The protein localises to the endoplasmic reticulum membrane. Its pathway is glycolipid biosynthesis; glycosylphosphatidylinositol-anchor biosynthesis. Ethanolamine phosphate transferase involved in glycosylphosphatidylinositol-anchor biosynthesis. Transfers ethanolamine phosphate to the first alpha-1,4-linked mannose of the glycosylphosphatidylinositol precursor of GPI-anchor. The chain is GPI ethanolamine phosphate transferase 1 (mcd4) from Aspergillus fumigatus (strain ATCC MYA-4609 / CBS 101355 / FGSC A1100 / Af293) (Neosartorya fumigata).